A 345-amino-acid polypeptide reads, in one-letter code: UDP-N-acetylenolpyruvoylglucosamine reductase (345 aa).

The FAD-binding PCMH-type domain maps to 16 to 186 (LPAYASNVIS…VSVGIKLMKS (171 aa)). The active site involves Arg162. Residue Ser232 is the Proton donor of the active site. Glu328 is a catalytic residue.

The protein belongs to the MurB family. The cofactor is FAD.

It localises to the cytoplasm. The enzyme catalyses UDP-N-acetyl-alpha-D-muramate + NADP(+) = UDP-N-acetyl-3-O-(1-carboxyvinyl)-alpha-D-glucosamine + NADPH + H(+). It functions in the pathway cell wall biogenesis; peptidoglycan biosynthesis. In terms of biological role, cell wall formation. This Yersinia pestis protein is UDP-N-acetylenolpyruvoylglucosamine reductase.